Reading from the N-terminus, the 117-residue chain is Ig heavy chain V region 1-72 (117 aa).

The first 19 residues, 1–19 (MGWSCIMLFLAATATGVHS), serve as a signal peptide directing secretion. Positions 20–49 (QVQLQQPGAELVKPGASVKLSCKASGYTFT) are framework-1. The cysteines at positions 41 and 115 are disulfide-linked. The complementarity-determining-1 stretch occupies residues 50–54 (SYWMH). Positions 55–68 (WVKQRPGRGLEWIG) are framework-2. The segment at 69 to 85 (RIDPNSGGTKYNEKFKS) is complementarity-determining-2. Residues 86–117 (KATLTVDKPSSTAYMQLSSLTSEDSAVYYCAR) are framework-3.

The sequence is that of Ig heavy chain V region 1-72 from Mus musculus (Mouse).